We begin with the raw amino-acid sequence, 483 residues long: MEDPLLLGDNQIITGSLKPTPTWRMNFTAELKNLSRMALPMATVTVAQYLLPVISVMVAGHRSELQLSGVALATSFTNVSGFSVMFGLAGALETLCGQAYGAKQYAKIGTYTFSAIVSNVPIVVLISILWFYMDKLFVSLGQDPDISKVAGSYAVCLIPALLAQAVQQPLTRFLQTQGLVLPLLYCAITTLLFHIPVCLILVYAFGLGSNGAALAIGLSYWFNVLILALYVRFSSSCEKTRGFVSDDFVLSVKQFFQYGIPSAAMTTIEWSLFEFLILSSGLLPNPKLETSVLSICLTTSSLHYVIPMGIGAAGSIRVSNELGAGNPEVARLAVFAGIFLWFLEATICSTLLFICRDIFGYAFSNSKEVVDYVTELSPLLCISFLVDGFSAVLGGVARGSGWQHIGAWANVVAYYLLGAPVGLFLGFWCHMNGKGLWIGVVVGSTAQGIILAIVTACMSWNEQAAKARQRIVVRTSSFGNGLA.

12 helical membrane passes run 38-58 (ALPM…SVMV), 69-89 (GVAL…FGLA), 113-133 (FSAI…WFYM), 146-166 (ISKV…AQAV), 187-207 (AITT…AFGL), 211-231 (GAAL…ALYV), 263-283 (AAMT…SGLL), 292-312 (VLSI…GIGA), 334-354 (VFAG…LLFI), 376-396 (LSPL…LGGV), 405-425 (IGAW…GLFL), and 436-456 (LWIG…IVTA).

Belongs to the multi antimicrobial extrusion (MATE) (TC 2.A.66.1) family.

The protein localises to the membrane. The protein is Protein DETOXIFICATION 6 of Arabidopsis thaliana (Mouse-ear cress).